The following is a 140-amino-acid chain: Nucleoside diphosphate kinase (140 aa).

ATP is bound by residues K11, F59, R87, T93, R104, and N114. Residue H117 is the Pros-phosphohistidine intermediate of the active site.

This sequence belongs to the NDK family. In terms of assembly, homotetramer. Mg(2+) is required as a cofactor.

The protein resides in the cytoplasm. It catalyses the reaction a 2'-deoxyribonucleoside 5'-diphosphate + ATP = a 2'-deoxyribonucleoside 5'-triphosphate + ADP. The catalysed reaction is a ribonucleoside 5'-diphosphate + ATP = a ribonucleoside 5'-triphosphate + ADP. In terms of biological role, major role in the synthesis of nucleoside triphosphates other than ATP. The ATP gamma phosphate is transferred to the NDP beta phosphate via a ping-pong mechanism, using a phosphorylated active-site intermediate. The protein is Nucleoside diphosphate kinase of Rhodopseudomonas palustris (strain ATCC BAA-98 / CGA009).